Reading from the N-terminus, the 160-residue chain is Photosystem II extrinsic protein V (160 aa).

An N-terminal signal peptide occupies residues 1 to 25 (MKRFILLAIATVFFFCQFQTNPVNA). 4 residues coordinate heme c: Cys62, Cys65, His66, and His117.

Belongs to the cytochrome c family. PsbV subfamily. In terms of assembly, PSII is composed of 1 copy each of membrane proteins PsbA, PsbB, PsbC, PsbD, PsbE, PsbF, PsbH, PsbI, PsbJ, PsbK, PsbL, PsbM, PsbT, PsbX, PsbY, PsbZ, Psb30/Ycf12, peripheral proteins PsbO, CyanoQ (PsbQ), PsbU, PsbV and a large number of cofactors. It forms dimeric complexes. Heme c is required as a cofactor.

It is found in the cellular thylakoid membrane. One of the extrinsic, lumenal subunits of photosystem II (PSII). PSII is a light-driven water plastoquinone oxidoreductase, using light energy to abstract electrons from H(2)O, generating a proton gradient subsequently used for ATP formation. The extrinsic proteins stabilize the structure of photosystem II oxygen-evolving complex (OEC), the ion environment of oxygen evolution and protect the OEC against heat-induced inactivation. Low-potential cytochrome c that plays a role in the OEC of PSII. The sequence is that of Photosystem II extrinsic protein V from Rippkaea orientalis (strain PCC 8801 / RF-1) (Cyanothece sp. (strain PCC 8801)).